The primary structure comprises 594 residues: MLRGIFHICLLASFLLLPFSSAVHDSGFTGGTDAPPPWDHNVSPPPETAPSPTPTSSPSTTSPPSPGPVAAPSPINNGSVSGDMTWWCNKTPHAETCNYYFRKSSQNNINLRPPRFRSEFLRMLVKVALDQAVITHSQTVKFGPSCTNNQRKAAWSDCVNLFQNTVAQLNRTLKGLNPAASSDVKCTDFDAQTWLSTAQTNIETCRSGSEDLNVSDFVMPVISNKNLSDLIGNCLAVNGVLMKQHDHTTTANHKEYFPSWVSRHERRLLVSASLAKSSPHLVVAQDRSGHFRSIQAAINFAARRRFKSRFVIYVKKGVYRENIDVGNDNHNIMLVGDGERKTIITSGRSVQHGYTTYNSATGGFGGQRFVAKDMTFINTAGPLRGQAVAVRSSSDLSVFYRVGIHGFQDTLYIHSQRQFFRECYISGTIDFIFGNAAVVFQNCMILVRRPLHGQANIITAQGRGDPFQNTGITIHSSRIIAASDLKPVIRAYKTYLGRPWQAYSRVTIMKTYIDNSISPLGWSPWLRGSNFALNTVFYGEYKNFGPGSSTRWRVRWKGFHAITSTAVASRFTVGSLIAGGSWLPATGVPFKSGL.

The first 22 residues, M1–A22, serve as a signal peptide directing secretion. The segment at F28 to I75 is disordered. The segment covering A34–A71 has biased composition (pro residues). Residues N77, N170, N213, and N226 are each glycosylated (N-linked (GlcNAc...) asparagine). The interval G78–V237 is pectinesterase inhibitor 33. A pectinesterase 33 region spans residues H280–S581. Substrate contacts are provided by T356 and Q386. D409 functions as the Proton donor; for pectinesterase activity in the catalytic mechanism. A disulfide bond links C423 and C443. D430 acts as the Nucleophile; for pectinesterase activity in catalysis. 2 residues coordinate substrate: R498 and W500.

In the N-terminal section; belongs to the PMEI family. The protein in the C-terminal section; belongs to the pectinesterase family. As to expression, expressed in siliques.

It localises to the secreted. The protein resides in the cell wall. It catalyses the reaction [(1-&gt;4)-alpha-D-galacturonosyl methyl ester](n) + n H2O = [(1-&gt;4)-alpha-D-galacturonosyl](n) + n methanol + n H(+). Its pathway is glycan metabolism; pectin degradation; 2-dehydro-3-deoxy-D-gluconate from pectin: step 1/5. Its function is as follows. Acts in the modification of cell walls via demethylesterification of cell wall pectin. The polypeptide is Probable pectinesterase/pectinesterase inhibitor 33 (PME33) (Arabidopsis thaliana (Mouse-ear cress)).